The following is a 164-amino-acid chain: Large ribosomal subunit protein uL23 (164 aa).

The tract at residues Met-1–Val-41 is disordered.

The protein belongs to the universal ribosomal protein uL23 family.

Functionally, this protein binds to a specific region on the 26S rRNA. The protein is Large ribosomal subunit protein uL23 (RPL23A) of Trypanosoma brucei brucei.